Reading from the N-terminus, the 1012-residue chain is DNA polymerase catalytic subunit (1012 aa).

The protein belongs to the DNA polymerase type-B family.

The protein localises to the host nucleus. The catalysed reaction is DNA(n) + a 2'-deoxyribonucleoside 5'-triphosphate = DNA(n+1) + diphosphate. In Human herpesvirus 6A (strain Uganda-1102) (HHV-6 variant A), this protein is DNA polymerase catalytic subunit (U38).